The following is a 198-amino-acid chain: Glycerol-3-phosphate acyltransferase (198 aa).

Transmembrane regions (helical) follow at residues 6-26, 56-78, 83-101, 113-133, and 154-174; these read MLPVALLIGYLLGSIPFGLIL, LAAATLLGDALKGTAAVIIAGYL, AAMLAGLGAFLGHLFPVWL, IGILIGLLWPYAIFFCLVWLA, and IVLWAFGHTALAALFALLTLL.

Belongs to the PlsY family. Probably interacts with PlsX.

It is found in the cell inner membrane. It catalyses the reaction an acyl phosphate + sn-glycerol 3-phosphate = a 1-acyl-sn-glycero-3-phosphate + phosphate. The protein operates within lipid metabolism; phospholipid metabolism. In terms of biological role, catalyzes the transfer of an acyl group from acyl-phosphate (acyl-PO(4)) to glycerol-3-phosphate (G3P) to form lysophosphatidic acid (LPA). This enzyme utilizes acyl-phosphate as fatty acyl donor, but not acyl-CoA or acyl-ACP. The chain is Glycerol-3-phosphate acyltransferase from Bradyrhizobium sp. (strain ORS 278).